A 304-amino-acid chain; its full sequence is UDP-N-acetylenolpyruvoylglucosamine reductase (304 aa).

The 166-residue stretch at 33–198 (KVGGPVDILL…LRATFNLVNG (166 aa)) folds into the FAD-binding PCMH-type domain. Arginine 177 is an active-site residue. Serine 227 functions as the Proton donor in the catalytic mechanism. Glutamate 297 is a catalytic residue.

The protein belongs to the MurB family. It depends on FAD as a cofactor.

It localises to the cytoplasm. The enzyme catalyses UDP-N-acetyl-alpha-D-muramate + NADP(+) = UDP-N-acetyl-3-O-(1-carboxyvinyl)-alpha-D-glucosamine + NADPH + H(+). The protein operates within cell wall biogenesis; peptidoglycan biosynthesis. Functionally, cell wall formation. The chain is UDP-N-acetylenolpyruvoylglucosamine reductase from Clostridium beijerinckii (strain ATCC 51743 / NCIMB 8052) (Clostridium acetobutylicum).